A 994-amino-acid chain; its full sequence is MLKQQFHENLEVQHVNLLPRRAFYIPYQQGEADYHFETRYNTRNATLLNGEWYFQYFESLEAYLNHSNKQESKTLTVPSVWNLYGYDQIQYLNTQYPIPFNPPYVPKDNPCGHYTRKFTIDEYDQQYDYHLNFEGVDSAFYVWINNEFIGYSQISHAISEFDISNFVKQGENNIEVLVLKYSDGTYLEDQDMFRHSGIFRDVYILKRATERVDDFKVETNLSDDLNAAQIDVKIERAHNLKSVEFQLYNPKGEEVASISGVNEHQFDVHNPHLWSTENPVLYTLYILTDQEVITQKVGIREVAIQNNQFYINGQSIKIRGTNYHDSHPETGYVMTESHFKKDLELMKQGNFNAIRTAHYPKSPLFYEMTDQYGFYVMSEADIETHGVVRLYGEDNNEDFNIIADDSKFETAIIERIEASIMPLKNYSSIVSWSLGNESGFGKNMVKGAARAKSLDNTRPIHYEGTLYRDKQQHYDLSNIDMISRMYPSPEEIEETYLSNPDLDKPFILCEYAHAMGNSPGDLHAYQTLVEQYDSFIGGFVWEWCDHAIQTGMKDGNPIFRYGGDFGEKLHDGNFCVDGIVFPNRVPHEGYYEFKQEHRPLNLVSQEDFKIVLRNQLDFIPAEKYMFVEATVTNLNGGKTISEIPLSNFLPHTAQTIDLSDYINIQHISDVILRYKLKYDDIFRHENFELGHDQIVYQRRTLKEQNEQSDETEILVTQTDKLIKVSVGKSETYVFNKDNASLESVLKHNHIVISQNTTNNIWRAPTDNDTNIKNDWAYSGYKDITTRVHDYQIVENETEVSLIFNIAMVNDAVPPVLFGTVTWHVQRNGTLNVTYDLERDMKAPYLPRFGLGLTLPKAFEQVKYYGKGPFSSYQDKGVANYLDDFGTTVTDNGEIHIRPQETGSHNETTFVEISDGCKKVIVTSDNTFSFNTTHYSLKQLTETTHKDALEPEDQTYLYIDYAQSGIGSNSCGPELNEAYRLNNRHIEFSFNLKFV.

Residue Glu437 is the Proton donor of the active site. Glu510 serves as the catalytic Nucleophile.

The protein belongs to the glycosyl hydrolase 2 family.

The catalysed reaction is Hydrolysis of terminal non-reducing beta-D-galactose residues in beta-D-galactosides.. This is Beta-galactosidase (lacZ) from Staphylococcus xylosus.